Reading from the N-terminus, the 370-residue chain is Aminomethyltransferase (370 aa).

The protein belongs to the GcvT family. In terms of assembly, the glycine cleavage system is composed of four proteins: P, T, L and H.

It carries out the reaction N(6)-[(R)-S(8)-aminomethyldihydrolipoyl]-L-lysyl-[protein] + (6S)-5,6,7,8-tetrahydrofolate = N(6)-[(R)-dihydrolipoyl]-L-lysyl-[protein] + (6R)-5,10-methylene-5,6,7,8-tetrahydrofolate + NH4(+). Its function is as follows. The glycine cleavage system catalyzes the degradation of glycine. The polypeptide is Aminomethyltransferase (Corynebacterium aurimucosum (strain ATCC 700975 / DSM 44827 / CIP 107346 / CN-1) (Corynebacterium nigricans)).